A 543-amino-acid polypeptide reads, in one-letter code: Periplasmic oligopeptide-binding protein OppA (543 aa).

The signal sequence occupies residues 1-26 (MTNITKRSLVAAGVLAALMAGNVALA). The cysteines at positions 297 and 443 are disulfide-linked.

Belongs to the bacterial solute-binding protein 5 family. The complex is composed of two ATP-binding proteins (OppD and OppF), two transmembrane proteins (OppB and OppC) and a solute-binding protein (OppA).

The protein resides in the periplasm. Part of the ABC transporter complex OppABCDF involved in the uptake of oligopeptides. Plays an important nutritional role. Binds peptides containing from two to five amino acid residues. Displays a preference for tripeptides and tetrapeptides over dipeptides and pentapeptides, for peptides composed of L-amino acids and for positively charged peptides. Cannot bind the cell wall peptide L-Ala-D-Gly-gamma-meso-diaminopimelic acid. The sequence is that of Periplasmic oligopeptide-binding protein OppA from Escherichia coli (strain K12).